Here is a 95-residue protein sequence, read N- to C-terminus: Large ribosomal subunit protein bL25 (95 aa).

Belongs to the bacterial ribosomal protein bL25 family. As to quaternary structure, part of the 50S ribosomal subunit; part of the 5S rRNA/L5/L18/L25 subcomplex. Contacts the 5S rRNA. Binds to the 5S rRNA independently of L5 and L18.

Functionally, this is one of the proteins that binds to the 5S RNA in the ribosome where it forms part of the central protuberance. The sequence is that of Large ribosomal subunit protein bL25 from Buchnera aphidicola subsp. Acyrthosiphon pisum (strain 5A).